A 723-amino-acid polypeptide reads, in one-letter code: Transmembrane channel-like protein 7 (723 aa).

Disordered stretches follow at residues 1 to 28 and 51 to 71; these read MSES…LSLD and RRRT…KPTD. The Extracellular portion of the chain corresponds to 1-168; that stretch reads MSESSGSALQ…GIQSYFSFLR (168 aa). Asn24 carries N-linked (GlcNAc...) asparagine glycosylation. An N-linked (GlcNAc...) asparagine glycan is attached at Asn84. Position 89 is a phosphoserine (Ser89). Asn96 carries an N-linked (GlcNAc...) asparagine glycan. The chain crosses the membrane as a helical span at residues 169 to 189; sequence FLVLLNLVIFLIIFMLVLLPV. At 190–219 the chain is on the cytoplasmic side; the sequence is LLTKYKITNSSFVLIPFKDMDKQCTVYPVS. A helical transmembrane segment spans residues 220 to 240; it reads SSGLIYFYSYIIDLLSGTGFL. Residues 241–263 lie on the Extracellular side of the membrane; the sequence is EETSLFYGHYTIDGVKFQNFTYD. Residue Asn259 is glycosylated (N-linked (GlcNAc...) asparagine). The helical transmembrane segment at 264–284 threads the bilayer; it reads LPLAYLLSTIASLALSLLWIV. Residues 285 to 362 lie on the Cytoplasmic side of the membrane; the sequence is KRSVEGFKIN…EETIRIYSLR (78 aa). A helical transmembrane segment spans residues 363–383; sequence LFLNCIVLAVLGACFYAIYVA. Topologically, residues 384 to 404 are extracellular; sequence TVFSQEHMKKEIDKMVFGENL. Residues 405–425 form a helical membrane-spanning segment; that stretch reads FILYLPSIVITLANFITPMIF. The Cytoplasmic segment spans residues 426–494; the sequence is AKIIRYEDYS…PCWETQVGQE (69 aa). A helical membrane pass occupies residues 495 to 515; sequence MYKLMIFDFIIILAVTLFVDF. Residues 516 to 555 are Extracellular-facing; the sequence is PRKLLVTYCSSCKLIQCWGQQEFAIPDNVLGIVYGQTICW. The helical transmembrane segment at 556-576 threads the bilayer; the sequence is IGAFFSPLLPAIATLKFIIIF. The Cytoplasmic segment spans residues 577–601; the sequence is YVKEWSLLYTCRPSPRPFRASNSNF. A helical membrane pass occupies residues 602–622; it reads FFLLVLLIGLCLAIIPLTISI. At 623-665 the chain is on the extracellular side; sequence SRIPSSKACGPFTNFNTTWEVIPKTVSTFPSSLQSFIHGVTSE. Residue Asn638 is glycosylated (N-linked (GlcNAc...) asparagine). Residues 666 to 686 form a helical membrane-spanning segment; the sequence is AFAVPFFMIICLIMFYFIALA. Over 687 to 723 the chain is Cytoplasmic; the sequence is GAHKRVVIQLREQLSLESRDKCYLIQKLTEAQRDMRN.

It belongs to the TMC family. In terms of assembly, interacts with PIEZO2; the interaction inhibits PIEZO2-conducted mechanically activated currents.

It is found in the membrane. In terms of biological role, acts as an inhibitory modulator of PIEZO2 mechanosensitive channel in dorsal root ganglion (DRG) neurons through physical interactions or interference with the interaction between PIEZO2 and the cytoskeleton. The protein is Transmembrane channel-like protein 7 of Homo sapiens (Human).